The following is a 206-amino-acid chain: Glycerol-3-phosphate acyltransferase (206 aa).

5 helical membrane-spanning segments follow: residues 3–23, 47–67, 79–99, 119–139, and 152–172; these read LSLI…VIIG, VLGP…GTLA, HSLV…SIFL, PLFF…TSMV, and ILSF…VLIF.

Belongs to the PlsY family. As to quaternary structure, probably interacts with PlsX.

It localises to the cell membrane. It catalyses the reaction an acyl phosphate + sn-glycerol 3-phosphate = a 1-acyl-sn-glycero-3-phosphate + phosphate. Its pathway is lipid metabolism; phospholipid metabolism. Its function is as follows. Catalyzes the transfer of an acyl group from acyl-phosphate (acyl-PO(4)) to glycerol-3-phosphate (G3P) to form lysophosphatidic acid (LPA). This enzyme utilizes acyl-phosphate as fatty acyl donor, but not acyl-CoA or acyl-ACP. This Latilactobacillus sakei subsp. sakei (strain 23K) (Lactobacillus sakei subsp. sakei) protein is Glycerol-3-phosphate acyltransferase.